A 239-amino-acid chain; its full sequence is Ribonuclease HII (239 aa).

Residues 30 to 221 enclose the RNase H type-2 domain; it reads GPVAGVDEVG…VRRVATRSNG (192 aa). Residues Asp-36, Glu-37, and Asp-130 each coordinate a divalent metal cation. The tract at residues 217–239 is disordered; it reads TRSNGAATAEREADPPQERDGTG. Positions 225-239 are enriched in basic and acidic residues; that stretch reads AEREADPPQERDGTG.

The protein belongs to the RNase HII family. The cofactor is Mn(2+). It depends on Mg(2+) as a cofactor.

The protein localises to the cytoplasm. The enzyme catalyses Endonucleolytic cleavage to 5'-phosphomonoester.. In terms of biological role, endonuclease that specifically degrades the RNA of RNA-DNA hybrids. In Mycobacterium ulcerans (strain Agy99), this protein is Ribonuclease HII.